The primary structure comprises 409 residues: NADH-quinone oxidoreductase subunit D (409 aa).

This sequence belongs to the complex I 49 kDa subunit family. In terms of assembly, NDH-1 is composed of 14 different subunits. Subunits NuoB, C, D, E, F, and G constitute the peripheral sector of the complex.

It is found in the cell inner membrane. The enzyme catalyses a quinone + NADH + 5 H(+)(in) = a quinol + NAD(+) + 4 H(+)(out). NDH-1 shuttles electrons from NADH, via FMN and iron-sulfur (Fe-S) centers, to quinones in the respiratory chain. The immediate electron acceptor for the enzyme in this species is believed to be ubiquinone. Couples the redox reaction to proton translocation (for every two electrons transferred, four hydrogen ions are translocated across the cytoplasmic membrane), and thus conserves the redox energy in a proton gradient. This Thermus thermophilus (strain ATCC BAA-163 / DSM 7039 / HB27) protein is NADH-quinone oxidoreductase subunit D (nuoD).